A 177-amino-acid polypeptide reads, in one-letter code: Peptide methionine sulfoxide reductase MsrA 2 (177 aa).

Residue C12 is part of the active site.

The protein belongs to the MsrA Met sulfoxide reductase family.

It catalyses the reaction L-methionyl-[protein] + [thioredoxin]-disulfide + H2O = L-methionyl-(S)-S-oxide-[protein] + [thioredoxin]-dithiol. It carries out the reaction [thioredoxin]-disulfide + L-methionine + H2O = L-methionine (S)-S-oxide + [thioredoxin]-dithiol. Functionally, has an important function as a repair enzyme for proteins that have been inactivated by oxidation. Catalyzes the reversible oxidation-reduction of methionine sulfoxide in proteins to methionine. This is Peptide methionine sulfoxide reductase MsrA 2 (msrA2) from Staphylococcus aureus (strain Mu50 / ATCC 700699).